The chain runs to 181 residues: Negative modulator of initiation of replication (181 aa).

3 interaction with DNA regions span residues 87 to 88 (AV), 116 to 120 (RTRVY), and 150 to 156 (NTNTGRK).

This sequence belongs to the SeqA family. Homodimer. Polymerizes to form helical filaments.

Its subcellular location is the cytoplasm. Its function is as follows. Negative regulator of replication initiation, which contributes to regulation of DNA replication and ensures that replication initiation occurs exactly once per chromosome per cell cycle. Binds to pairs of hemimethylated GATC sequences in the oriC region, thus preventing assembly of replication proteins and re-initiation at newly replicated origins. Repression is relieved when the region becomes fully methylated. This Shigella dysenteriae serotype 1 (strain Sd197) protein is Negative modulator of initiation of replication.